The sequence spans 500 residues: NAD(P)H-quinone oxidoreductase chain 4, chloroplastic (500 aa).

Helical transmembrane passes span 4–24 (FPWL…IFFL), 35–55 (YTIC…CYHF), 87–107 (LGPV…AWPV), 113–130 (LFHF…GSFS), 134–154 (LLLF…LLSM), 167–187 (FILY…GVGL), 207–227 (VALE…KLPI), 242–262 (HYST…YGLI), 272–292 (AHSI…IYAA), 305–325 (IAYS…SITD), 330–350 (GAIL…FLAG), 386–406 (LALP…GIIT), 416–436 (IAIT…LLSM), and 462–482 (LFVS…PDFV).

Belongs to the complex I subunit 4 family.

The protein localises to the plastid. The protein resides in the chloroplast thylakoid membrane. It catalyses the reaction a plastoquinone + NADH + (n+1) H(+)(in) = a plastoquinol + NAD(+) + n H(+)(out). It carries out the reaction a plastoquinone + NADPH + (n+1) H(+)(in) = a plastoquinol + NADP(+) + n H(+)(out). In Helianthus annuus (Common sunflower), this protein is NAD(P)H-quinone oxidoreductase chain 4, chloroplastic.